A 41-amino-acid polypeptide reads, in one-letter code: Augerpeptide-s11a (41 aa).

Contains 4 disulfide bonds. In terms of tissue distribution, expressed by the venom duct.

It localises to the secreted. Does not elicit any observable symptomatology in C.elegans. The chain is Augerpeptide-s11a from Terebra subulata (Chocolate spotted auger).